A 176-amino-acid polypeptide reads, in one-letter code: MSLLEGLALFLLLLSGVLVVTLRNAIHAALALILNFLVLAGVYVALDARFLGFIQVIVYAGAIVVLFLFVIMLLFAAQGEIGFDPLVRSRPLAALLALGVAGILAAGLWGLDLAFTQDLKGGLPQALGPLLYGDWLFVLLAVGFLLMAATVVAVALVEPGKASRAKEAEKREEVAR.

5 consecutive transmembrane segments (helical) span residues S2–L22, I26–L46, V56–A76, P91–L111, and F137–V157.

The protein belongs to the complex I subunit 6 family. As to quaternary structure, NDH-1 is composed of 15 different subunits, Nqo1 to Nqo15. The complex has a L-shaped structure, with the hydrophobic arm (subunits Nqo7, Nqo8 and Nqo10 to Nqo14) embedded in the membrane and the hydrophilic peripheral arm (subunits Nqo1 to Nqo6, Nqo9 and Nqo15) protruding into the bacterial cytoplasm. The hydrophilic domain contains all the redox centers.

It is found in the cell inner membrane. It carries out the reaction a quinone + NADH + 5 H(+)(in) = a quinol + NAD(+) + 4 H(+)(out). NDH-1 shuttles electrons from NADH, via FMN and iron-sulfur (Fe-S) centers, to quinones in the respiratory chain. The immediate electron acceptor for the enzyme in this species is menaquinone. Couples the redox reaction to proton translocation (for every two electrons transferred, four hydrogen ions are translocated across the cytoplasmic membrane), and thus conserves the redox energy in a proton gradient required for the synthesis of ATP. The sequence is that of NADH-quinone oxidoreductase subunit 10 (nqo10) from Thermus thermophilus (strain ATCC 27634 / DSM 579 / HB8).